The sequence spans 529 residues: Peptide chain release factor 3 (529 aa).

The tr-type G domain occupies 11–280 (AKRRTFAIIS…GLVEWAPAPM (270 aa)). Residues 20 to 27 (SHPDAGKT), 88 to 92 (DTPGH), and 142 to 145 (NKLD) contribute to the GTP site.

This sequence belongs to the TRAFAC class translation factor GTPase superfamily. Classic translation factor GTPase family. PrfC subfamily.

The protein localises to the cytoplasm. Increases the formation of ribosomal termination complexes and stimulates activities of RF-1 and RF-2. It binds guanine nucleotides and has strong preference for UGA stop codons. It may interact directly with the ribosome. The stimulation of RF-1 and RF-2 is significantly reduced by GTP and GDP, but not by GMP. In Shigella flexneri serotype 5b (strain 8401), this protein is Peptide chain release factor 3.